A 251-amino-acid polypeptide reads, in one-letter code: Adenosylcobinamide-GDP ribazoletransferase (251 aa).

7 helical membrane-spanning segments follow: residues 36–56 (LYPF…FVLS), 60–80 (VPIM…TGFL), 110–130 (VGAF…AGMF), 141–161 (VLIF…VSQE), 181–201 (EIIL…TLGI), 202–222 (NYLI…LKVK), and 231–251 (DVAG…LGII).

It belongs to the CobS family. Mg(2+) serves as cofactor.

Its subcellular location is the cell membrane. It catalyses the reaction alpha-ribazole + adenosylcob(III)inamide-GDP = adenosylcob(III)alamin + GMP + H(+). It carries out the reaction alpha-ribazole 5'-phosphate + adenosylcob(III)inamide-GDP = adenosylcob(III)alamin 5'-phosphate + GMP + H(+). The protein operates within cofactor biosynthesis; adenosylcobalamin biosynthesis; adenosylcobalamin from cob(II)yrinate a,c-diamide: step 7/7. Its function is as follows. Joins adenosylcobinamide-GDP and alpha-ribazole to generate adenosylcobalamin (Ado-cobalamin). Also synthesizes adenosylcobalamin 5'-phosphate from adenosylcobinamide-GDP and alpha-ribazole 5'-phosphate. The chain is Adenosylcobinamide-GDP ribazoletransferase from Clostridium perfringens (strain 13 / Type A).